A 513-amino-acid chain; its full sequence is Sodium/potassium/calcium exchanger 5 (513 aa).

The first 35 residues, 1-35, serve as a signal peptide directing secretion; it reads MRTDVFLQRRKRRDVLLSIIALLLLIFAIVHLVFC. The Extracellular segment spans residues 36-78; the sequence is AGLSFQGSSSARVRRDLENASECVQPQSSEFPEGFFTVQERKD. Residues 79 to 99 traverse the membrane as a helical segment; that stretch reads GGILIYFMIIFYMLLSVSIVC. The Cytoplasmic segment spans residues 100–123; sequence DEYFLPSLEVISERLGLSQDVAGA. Residues 124 to 144 traverse the membrane as a helical segment; it reads TFMAAGSSAPELVTAFLGVFV. The Extracellular segment spans residues 145 to 148; the sequence is TKGD. The chain crosses the membrane as a helical span at residues 149-169; it reads IGVSTIMGSAVYNLLCICAAC. The Cytoplasmic portion of the chain corresponds to 170–181; the sequence is GLLSSAVGRLSC. A helical membrane pass occupies residues 182 to 202; it reads WPLFRDCVAYAISVAAVIAII. The Extracellular segment spans residues 203 to 207; the sequence is SDNRV. The helical transmembrane segment at 208 to 228 threads the bilayer; the sequence is YWYDGACLLLVYGVYVAVLCF. Topologically, residues 229–315 are cytoplasmic; sequence DLRISEYVMQ…KSVFSMPDHD (87 aa). A helical membrane pass occupies residues 316-336; sequence LKRILWVLSLPVSTLLFVSVP. Residues 337 to 350 are Extracellular-facing; that stretch reads DCRRPFWKNFYMLT. The helical transmembrane segment at 351–371 threads the bilayer; sequence FLMSAVWISAFTYVLVWMVTI. Over 372–381 the chain is Cytoplasmic; sequence VGETLGIPDT. A helical membrane pass occupies residues 382–402; that stretch reads VMGMTLLAAGTSIPDTVASVM. Over 403 to 420 the chain is Extracellular; it reads VAREGKSDMAMSNIVGSN. Residues 421–441 form a helical membrane-spanning segment; the sequence is VFDMLCLGLPWFIQTVFVDVG. The Cytoplasmic portion of the chain corresponds to 442–450; that stretch reads SPVEVNSSG. A helical transmembrane segment spans residues 451–471; the sequence is LVFMSCTLLLSIIFLFLAVHI. The Extracellular segment spans residues 472 to 482; that stretch reads NGWKLDWKLGL. The helical transmembrane segment at 483 to 503 threads the bilayer; the sequence is VCLACYILFATLSILYELGII. Topologically, residues 504-513 are cytoplasmic; that stretch reads GNNPIRSCSD.

The protein belongs to the Ca(2+):cation antiporter (CaCA) (TC 2.A.19) family. SLC24A subfamily. As to expression, highly expressed in melanin-producing cells. Colocalizes with melanin biosynthesis marker dct.

The protein resides in the golgi apparatus. It localises to the trans-Golgi network membrane. It is found in the melanosome. It catalyses the reaction Ca(2+)(out) + K(+)(out) + 4 Na(+)(in) = Ca(2+)(in) + K(+)(in) + 4 Na(+)(out). Calcium, potassium:sodium antiporter that transports 1 Ca(2+) and 1 K(+) to the melanosome in exchange for 4 cytoplasmic Na(+). Involved in pigmentation, possibly by participating in ion transport in melanosomes. Predominant sodium-calcium exchanger in melanocytes. In Danio rerio (Zebrafish), this protein is Sodium/potassium/calcium exchanger 5 (slc24a5).